Here is a 370-residue protein sequence, read N- to C-terminus: Putative replication factor C small subunit L478 (370 aa).

An ATP-binding site is contributed by 41–48 (GPSGSGKK). Positions 342-353 (RNKEPEKSEKTK) are enriched in basic and acidic residues. Residues 342-370 (RNKEPEKSEKTKSKTGKLSRTNSKKTIKN) form a disordered region. Residues 354-370 (SKTGKLSRTNSKKTIKN) are compositionally biased toward basic residues.

Belongs to the activator 1 small subunits family. RfcS subfamily.

Functionally, part of the RFC clamp loader complex which loads the PCNA sliding clamp onto DNA. The polypeptide is Putative replication factor C small subunit L478 (Acanthamoeba polyphaga (Amoeba)).